The sequence spans 141 residues: Large ribosomal subunit protein uL16 (141 aa).

The interval 1–20 (MLMPKRTKYRKQMKGRNRGK) is disordered.

The protein belongs to the universal ribosomal protein uL16 family. As to quaternary structure, part of the 50S ribosomal subunit.

In terms of biological role, binds 23S rRNA and is also seen to make contacts with the A and possibly P site tRNAs. This chain is Large ribosomal subunit protein uL16, found in Helicobacter hepaticus (strain ATCC 51449 / 3B1).